The primary structure comprises 278 residues: Small ribosomal subunit protein uS3 (278 aa).

The KH type-2 domain maps to Ile38–Lys106. Positions Arg213–Gly278 are disordered. Residues Gln214–Val223 show a composition bias toward low complexity. The span at Arg232 to Gly253 shows a compositional bias: basic and acidic residues. Over residues Glu259 to Gly278 the composition is skewed to low complexity.

It belongs to the universal ribosomal protein uS3 family. Part of the 30S ribosomal subunit. Forms a tight complex with proteins S10 and S14.

Functionally, binds the lower part of the 30S subunit head. Binds mRNA in the 70S ribosome, positioning it for translation. This chain is Small ribosomal subunit protein uS3, found in Nocardioides sp. (strain ATCC BAA-499 / JS614).